The chain runs to 428 residues: Glutamine synthetase, chloroplastic (428 aa).

A chloroplast-targeting transit peptide spans 1 to 48 (MAQAVVPAMQCQVGAVRARPAAAAAAAGGRVWGVRRTGRGTSGFRVMA). Positions 75–155 (IIAEYIWVGG…VMCDTYTPAG (81 aa)) constitute a GS beta-grasp domain. The disordered stretch occupies residues 95–120 (TISKPVEDPSELPKWNYDGSSTGQAP). The GS catalytic domain maps to 159 to 428 (PTNKRNRAAQ…LAAKKLALKV (270 aa)).

Belongs to the glutamine synthetase family. Homooctamer.

It is found in the plastid. It localises to the chloroplast. The enzyme catalyses L-glutamate + NH4(+) + ATP = L-glutamine + ADP + phosphate + H(+). Light-modulated chloroplastic glutamine synthetase, encoded by a nuclear gene and expressed primarily in leaves, and which is responsible for the reassimilation of the ammonia generated by photorespiration. The protein is Glutamine synthetase, chloroplastic of Oryza sativa subsp. japonica (Rice).